Here is a 273-residue protein sequence, read N- to C-terminus: NADPH-dependent 7-cyano-7-deazaguanine reductase (273 aa).

Substrate is bound at residue 80 to 82 (IES). Position 82–83 (82–83 (SK)) interacts with NADPH. Cysteine 180 functions as the Thioimide intermediate in the catalytic mechanism. Aspartate 187 serves as the catalytic Proton donor. Residue 219–220 (HE) participates in substrate binding. 248-249 (RG) provides a ligand contact to NADPH.

It belongs to the GTP cyclohydrolase I family. QueF type 2 subfamily. As to quaternary structure, homodimer.

It localises to the cytoplasm. It catalyses the reaction 7-aminomethyl-7-carbaguanine + 2 NADP(+) = 7-cyano-7-deazaguanine + 2 NADPH + 3 H(+). The protein operates within tRNA modification; tRNA-queuosine biosynthesis. Catalyzes the NADPH-dependent reduction of 7-cyano-7-deazaguanine (preQ0) to 7-aminomethyl-7-deazaguanine (preQ1). This chain is NADPH-dependent 7-cyano-7-deazaguanine reductase, found in Bordetella avium (strain 197N).